Consider the following 146-residue polypeptide: uncharacterized protein (146 aa).

The region spanning 1 to 137 (MLSQEFFNSF…TINVMNQIHE (137 aa)) is the HTH marR-type domain.

This is an uncharacterized protein from Staphylococcus aureus (strain N315).